A 397-amino-acid polypeptide reads, in one-letter code: Elongation factor Tu (397 aa).

The region spanning 10-206 is the tr-type G domain; that stretch reads KPHVNIGTIG…AVDQNIPEPQ (197 aa). A G1 region spans residues 19-26; sequence GHIDHGKT. Residue 19 to 26 participates in GTP binding; that stretch reads GHIDHGKT. Residue threonine 26 coordinates Mg(2+). The segment at 62 to 66 is G2; the sequence is GITIS. The G3 stretch occupies residues 83–86; sequence DCPG. GTP contacts are provided by residues 83–87 and 138–141; these read DCPGH and NKSD. Residues 138–141 are G4; the sequence is NKSD. The interval 176–178 is G5; it reads SAL.

The protein belongs to the TRAFAC class translation factor GTPase superfamily. Classic translation factor GTPase family. EF-Tu/EF-1A subfamily. Monomer.

It is found in the cytoplasm. It carries out the reaction GTP + H2O = GDP + phosphate + H(+). Functionally, GTP hydrolase that promotes the GTP-dependent binding of aminoacyl-tRNA to the A-site of ribosomes during protein biosynthesis. The protein is Elongation factor Tu of Thermobifida fusca (strain YX).